The chain runs to 91 residues: Putative regulatory protein Moth_0891 (91 aa).

This sequence belongs to the RemA family.

This Moorella thermoacetica (strain ATCC 39073 / JCM 9320) protein is Putative regulatory protein Moth_0891.